A 229-amino-acid chain; its full sequence is Protein FMP52-2, mitochondrial (229 aa).

Residues 1 to 45 (MAAGAFILGSTGLCGYQMLRFAEKSSLFDKISTVGRKLPDFKSEK) constitute a mitochondrion transit peptide.

It belongs to the FMP52 family.

It localises to the mitochondrion outer membrane. The protein is Protein FMP52-2, mitochondrial (FMP522) of Scheffersomyces stipitis (strain ATCC 58785 / CBS 6054 / NBRC 10063 / NRRL Y-11545) (Yeast).